A 154-amino-acid chain; its full sequence is Myoglobin (154 aa).

The Globin domain occupies 2 to 148; the sequence is GLSDGEWQLV…FRNDMAAKYK (147 aa). Ser4 is subject to Phosphoserine. Position 65 (His65) interacts with nitrite. His65 lines the O2 pocket. A Phosphothreonine modification is found at Thr68. Heme b is bound at residue His94.

It belongs to the globin family. In terms of assembly, monomeric.

Its subcellular location is the cytoplasm. The protein localises to the sarcoplasm. The enzyme catalyses Fe(III)-heme b-[protein] + nitric oxide + H2O = Fe(II)-heme b-[protein] + nitrite + 2 H(+). It catalyses the reaction H2O2 + AH2 = A + 2 H2O. Functionally, monomeric heme protein which primary function is to store oxygen and facilitate its diffusion within muscle tissues. Reversibly binds oxygen through a pentacoordinated heme iron and enables its timely and efficient release as needed during periods of heightened demand. Depending on the oxidative conditions of tissues and cells, and in addition to its ability to bind oxygen, it also has a nitrite reductase activity whereby it regulates the production of bioactive nitric oxide. Under stress conditions, like hypoxia and anoxia, it also protects cells against reactive oxygen species thanks to its pseudoperoxidase activity. The chain is Myoglobin (MB) from Callithrix jacchus (White-tufted-ear marmoset).